Reading from the N-terminus, the 1208-residue chain is Defective chorion protein, FC125 isoform (1208 aa).

A signal peptide spans 1–19 (MRLFSLLPLLALLVVQAAG). Disordered regions lie at residues 23–60 (VTSDDPATDAGSTTNSTTDTKPRIPSQDEILGQMPSIN), 184–212 (APAPAPAAAPPPAPAPAADPPAAPVPDAP), and 268–294 (PAQPAAAGTDAQASDISEVRVRPEDPY). Residues 32-41 (AGSTTNSTTD) are compositionally biased toward polar residues. Over residues 268 to 280 (PAQPAAAGTDAQA) the composition is skewed to low complexity. A run of 5 repeats spans residues 493 to 518 (QNPMMMQQRQWSEEQAKIQQNQQQIQ), 519 to 544 (QNPMMMQQRQWSEEQAKIQQNQQQIQ), 545 to 570 (QNPMMMQQRQWSEEQAKIQQNQQQIQ), 571 to 596 (QNPMMMQQRQWSEEQAKIQQNQQQIQ), and 597 to 622 (QNPMMVQQRQWSEEQAKIQQNQQQIQ). Positions 493–788 (QNPMMMQQRQ…IQQQQRQMMQ (296 aa)) are 12 X 26 AA approximate tandem repeats, Glu, Met-rich. A 6; approximate repeat occupies 623–652 (QNPMMMQQRQWSEEQAKIQHDQQMAQQMAQ). The 7; approximate repeat unit spans residues 653-680 (QGLMMTEQRQRQWSEDQAKIQQAQQMAQ). Residues 681 to 696 (QTPMMMPQMQQRQWTE) form an 8; approximate repeat. One copy of the 9; approximate repeat lies at 697–720 (DPQMVQQMQQRQWAEDQTRMQMAQ). The 10; approximate repeat unit spans residues 721–733 (QNPMMQQQRQMAE). Residues 734 to 758 (NPQMMQQRQWSEEQTKIEQAQQMAQ) form an 11; approximate repeat. Residues 759–788 (QNQMMMQQMQQRQWSEDQAQIQQQQRQMMQ) form a 12; approximate repeat. Acidic residues predominate over residues 828–839 (EDEDNKAEDDLV). Disordered regions lie at residues 828-875 (EDED…SKSA), 944-1010 (RTIN…GSIF), and 1114-1208 (VQPP…DVDD). Over residues 957-977 (SESQKSNSNPPTTLTPAPQEQ) the composition is skewed to polar residues. Acidic residues-rich tracts occupy residues 1163–1178 (PEPDEEDDRDVEEPSE) and 1194–1208 (NDIDYFNFDDDDVDD).

It localises to the secreted. In terms of biological role, required for proper assembly of the eggshell. The protein is Defective chorion protein, FC125 isoform of Drosophila melanogaster (Fruit fly).